Reading from the N-terminus, the 435-residue chain is Homogentisate 1,2-dioxygenase (435 aa).

The active-site Proton acceptor is the His-289. Positions 332 and 338 each coordinate Fe cation. The homogentisate site is built by Tyr-347 and His-368. His-368 provides a ligand contact to Fe cation.

This sequence belongs to the homogentisate dioxygenase family. In terms of assembly, hexamer; dimer of trimers. Fe cation serves as cofactor.

The catalysed reaction is homogentisate + O2 = 4-maleylacetoacetate + H(+). Its pathway is amino-acid degradation; L-phenylalanine degradation; acetoacetate and fumarate from L-phenylalanine: step 4/6. Functionally, involved in the catabolism of homogentisate (2,5-dihydroxyphenylacetate or 2,5-OH-PhAc), a central intermediate in the degradation of phenylalanine and tyrosine. Catalyzes the oxidative ring cleavage of the aromatic ring of homogentisate to yield maleylacetoacetate. This Pseudomonas savastanoi pv. phaseolicola (strain 1448A / Race 6) (Pseudomonas syringae pv. phaseolicola (strain 1448A / Race 6)) protein is Homogentisate 1,2-dioxygenase.